Consider the following 104-residue polypeptide: Small ribosomal subunit protein uS10 (104 aa).

This sequence belongs to the universal ribosomal protein uS10 family. Part of the 30S ribosomal subunit.

Involved in the binding of tRNA to the ribosomes. This chain is Small ribosomal subunit protein uS10, found in Aliarcobacter butzleri (strain RM4018) (Arcobacter butzleri).